Reading from the N-terminus, the 471-residue chain is Ribulose bisphosphate carboxylase large chain (471 aa).

Positions 1 to 2 (MS) are excised as a propeptide. Pro-3 is modified (N-acetylproline). Lys-14 carries the post-translational modification N6,N6,N6-trimethyllysine. The substrate site is built by Asn-123 and Thr-173. Lys-175 acts as the Proton acceptor in catalysis. Lys-177 is a binding site for substrate. Lys-201, Asp-203, and Glu-204 together coordinate Mg(2+). Residue Lys-201 is modified to N6-carboxylysine. His-294 acts as the Proton acceptor in catalysis. Residues Arg-295, His-327, and Ser-379 each contribute to the substrate site.

The protein belongs to the RuBisCO large chain family. Type I subfamily. As to quaternary structure, heterohexadecamer of 8 large chains and 8 small chains; disulfide-linked. The disulfide link is formed within the large subunit homodimers. Requires Mg(2+) as cofactor. The disulfide bond which can form in the large chain dimeric partners within the hexadecamer appears to be associated with oxidative stress and protein turnover.

It localises to the plastid. Its subcellular location is the chloroplast. It catalyses the reaction 2 (2R)-3-phosphoglycerate + 2 H(+) = D-ribulose 1,5-bisphosphate + CO2 + H2O. The catalysed reaction is D-ribulose 1,5-bisphosphate + O2 = 2-phosphoglycolate + (2R)-3-phosphoglycerate + 2 H(+). Its function is as follows. RuBisCO catalyzes two reactions: the carboxylation of D-ribulose 1,5-bisphosphate, the primary event in carbon dioxide fixation, as well as the oxidative fragmentation of the pentose substrate in the photorespiration process. Both reactions occur simultaneously and in competition at the same active site. This chain is Ribulose bisphosphate carboxylase large chain, found in Drymophloeus subdistichus (Palm tree).